The following is a 229-amino-acid chain: UPF0758 protein Moth_0536 (229 aa).

The 123-residue stretch at 107-229 (VIRNPRDVAG…FTSLKERNLL (123 aa)) folds into the MPN domain. Residues histidine 178, histidine 180, and aspartate 191 each coordinate Zn(2+). Positions 178 to 191 (HNHPSGDPTPSQED) match the JAMM motif motif.

Belongs to the UPF0758 family.

The polypeptide is UPF0758 protein Moth_0536 (Moorella thermoacetica (strain ATCC 39073 / JCM 9320)).